A 330-amino-acid chain; its full sequence is ADP-L-glycero-D-manno-heptose-6-epimerase (330 aa).

NADP(+) contacts are provided by residues 11–12 (FI), 32–33 (DN), Lys39, Lys54, 75–79 (EGACS), and Asn92. Residue Tyr139 is the Proton acceptor of the active site. Residue Lys143 participates in NADP(+) binding. Asn168 contributes to the substrate binding site. Residues Val169 and Lys177 each coordinate NADP(+). Lys177 acts as the Proton acceptor in catalysis. Residues Arg179, His186, 200–203 (FGEY), Arg213, and Tyr292 each bind substrate.

It belongs to the NAD(P)-dependent epimerase/dehydratase family. HldD subfamily. In terms of assembly, homopentamer. The cofactor is NADP(+).

The catalysed reaction is ADP-D-glycero-beta-D-manno-heptose = ADP-L-glycero-beta-D-manno-heptose. Its pathway is nucleotide-sugar biosynthesis; ADP-L-glycero-beta-D-manno-heptose biosynthesis; ADP-L-glycero-beta-D-manno-heptose from D-glycero-beta-D-manno-heptose 7-phosphate: step 4/4. Catalyzes the interconversion between ADP-D-glycero-beta-D-manno-heptose and ADP-L-glycero-beta-D-manno-heptose via an epimerization at carbon 6 of the heptose. The sequence is that of ADP-L-glycero-D-manno-heptose-6-epimerase from Paraburkholderia phymatum (strain DSM 17167 / CIP 108236 / LMG 21445 / STM815) (Burkholderia phymatum).